Consider the following 481-residue polypeptide: MAENDVDRIQTEKLLKRVQELEQEVKRLKKEQANNKDSNIRENSSGAGGKPKRAFDFSAHGQRHVALKIAYLGWGYQGFASQENTSNTIEEKLFEALTKTRLVENRQTSNYHRCGRTDKGVSAFGQVISLDLRSHIPKGRDSEHFNLKNEVNDVATEIRYTHILNRVLPPDIRVLAWAPVETSFSARFSCLERTYRYFFPRANLDIVTMNYAAQKYVGTHDFRNLCKMDVANGVINFQRTILSAQVQRVGQNLGEEGWQEPFQLCQFEVTGQAFLYHQVRCMMAVLFLIGQGMEKPEVIDELLNIEKNPQKPQYSMAVEFPLVLYDCKFENIKWIYDREVQEFNVTHLQQLWANHAVKTQMLYSMLQGLDSVALPCGTGPKMDGMIEWRNVKPSVTKQTSAFVEGVKMRTYKPLMDRPKCQGLESRIQHFVRRGRIEHPHLFHEEETKAKRDCSDTLEEENTVFEKPMKRICVDTELKSII.

Position 2 is an N-acetylalanine (A2). Basic and acidic residues predominate over residues K29–I40. The segment at K29 to A54 is disordered. The Nucleophile role is filled by D118. Y195 provides a ligand contact to substrate. T456 is modified (phosphothreonine).

This sequence belongs to the tRNA pseudouridine synthase TruA family.

Its subcellular location is the nucleus. It carries out the reaction uridine(38/39) in tRNA = pseudouridine(38/39) in tRNA. In terms of biological role, formation of pseudouridine at position 39 in the anticodon stem and loop of transfer RNAs. The sequence is that of tRNA pseudouridine(38/39) synthase (PUS3) from Bos taurus (Bovine).